A 277-amino-acid polypeptide reads, in one-letter code: MVTANSTVKVGNVTFSNSAPLALIAGPCQMETRDHAFEMAGRLKEMTDKLGIGLVYKSSFDKANRTSLKAARGIGLEKALEVFSDLKKEYGFPVLTDIHTEEQCAAVAPVVDVLQIPAFLCRQTDLLIAAARTGRVVNVKKGQFLAPWDMKNVLAKITESGNPNVLATERGVSFGYNTLVSDMRALPIMAGLGAPVIFDATHSVQQPGGQGGSTGGQREFVETLARAAVAVGVAGLFIETHEDPDNAPSDGPNMVPIDKMPALLEKLMAFDRIAKAL.

The protein belongs to the KdsA family.

It localises to the cytoplasm. The enzyme catalyses D-arabinose 5-phosphate + phosphoenolpyruvate + H2O = 3-deoxy-alpha-D-manno-2-octulosonate-8-phosphate + phosphate. The protein operates within carbohydrate biosynthesis; 3-deoxy-D-manno-octulosonate biosynthesis; 3-deoxy-D-manno-octulosonate from D-ribulose 5-phosphate: step 2/3. It functions in the pathway bacterial outer membrane biogenesis; lipopolysaccharide biosynthesis. The protein is 2-dehydro-3-deoxyphosphooctonate aldolase of Brucella melitensis biotype 2 (strain ATCC 23457).